Reading from the N-terminus, the 315-residue chain is Ribosomal RNA small subunit methyltransferase H (315 aa).

Residues 34-36 (GGH), Asp-53, Asp-100, and His-107 contribute to the S-adenosyl-L-methionine site.

This sequence belongs to the methyltransferase superfamily. RsmH family.

The protein localises to the cytoplasm. It catalyses the reaction cytidine(1402) in 16S rRNA + S-adenosyl-L-methionine = N(4)-methylcytidine(1402) in 16S rRNA + S-adenosyl-L-homocysteine + H(+). Functionally, specifically methylates the N4 position of cytidine in position 1402 (C1402) of 16S rRNA. The sequence is that of Ribosomal RNA small subunit methyltransferase H from Treponema denticola (strain ATCC 35405 / DSM 14222 / CIP 103919 / JCM 8153 / KCTC 15104).